The following is a 142-amino-acid chain: Putative pre-16S rRNA nuclease (142 aa).

It belongs to the YqgF nuclease family.

The protein localises to the cytoplasm. In terms of biological role, could be a nuclease involved in processing of the 5'-end of pre-16S rRNA. This Lawsonia intracellularis (strain PHE/MN1-00) protein is Putative pre-16S rRNA nuclease.